Reading from the N-terminus, the 189-residue chain is Mercury resistance operon ORF3 (189 aa).

The tat-type signal signal peptide spans 1–27 (MTSPSPTARRTRLRRRTALALAAAATA). The Thioredoxin domain occupies 38–189 (TKANTPATRA…IQDALKKAGA (152 aa)).

Predicted to be exported by the Tat system. The position of the signal peptide cleavage has not been experimentally proven.

The protein resides in the secreted. Functionally, probable mercury binding protein. In Streptomyces lividans, this protein is Mercury resistance operon ORF3.